Reading from the N-terminus, the 1045-residue chain is MGEIEQRPTPGSRLGAPENSGISTLERGQKPPPTPSGKLVSIKIQMLDDTQEAFEVPQRAPGKVLLDAVCNHLNLVEGDYFGLECPDHKKITVWLDLLKPLVKQIRRPKHVVVKFVVKFFPPDHTQLQEELTRYLFALQVKQDLAQGRLTCNDTSAALLISHIVQSEIGDFDEALDREHLAKNKYIPQQDALEDKIVEFHHNHIGQTPAESDFQLLEIARRLEMYGIRLHPAKDREGTKINLAVANTGILVFQGFTKINAFNWAKVRKLSFKRKRFLIKLRPDANSAYQDTLEFLMASRDFCKSFWKICVEHHAFFRLFEEPKPKPKPVLFSRGSSFRFSGRTQKQVLDYVKEGGHKKVQFERKHSKIHSIRSLASQPTELYSEVLEQSQQSASLTFGEGAESPGGQSCQQGKEPKVSPGEPGSHPSPVPRRSPAGNKQADGAASAPTEEEEEVVKDRTQQSKPQPPQPSTGSLTGSPHLSELSVNSQGGVAPANVTLSPNLSPDTKQASPLISPLLNDQACPRTDDEDEGRRKRFPTDKAYFIAKEVSTTERTYLKDLEVITSWFQSAVSKEDAMPEALKSLIFPNFEPLHKFHTNFLKEIEQRLALWEGRSNAQIRDYQRIGDVMLKNIQGMKHLAVHLWKHSEALEALENGIKSSRRLENFCRDFELQKVCYLPLNTFLLRPLHRHMHYKQVLERLCKHHPPSHADFRDCRAALAGITEMVAQLHGTMIKMENFQKLHELKKDLIGIDNLVVPGREFIRLGSLSKLSGKGLQQRMFFLFNDVLLYTSRGLTASNQFKVHGQLPLYGMTIKESEDEWGVPHCLTLRGQRQSIIVAASSRSEMEKWVEDIQMAIDLAEKNSSLAPEFLASSPPDNKSPDEATAADQESEDDLSASRTSLERQAPHRGNTMVHVCWHRNTSVSMVDFSVAVENQLSGNLLRKFKNSNGWQKLWVVFTNFCLFFYKSHQDNHPLASLPLLGYSLTIPTESENIHKDYVFKLHFKSHVYYFRAESEYTFERWMEVIRSATSSASRVHVSSHKESLVY.

Positions 1–37 are disordered; it reads MGEIEQRPTPGSRLGAPENSGISTLERGQKPPPTPSG. Serine 20 and serine 23 each carry phosphoserine. A Phosphothreonine modification is found at threonine 24. The FERM domain occupies 40–320; it reads VSIKIQMLDD…EHHAFFRLFE (281 aa). Phosphoserine is present on residues serine 340, serine 373, serine 389, serine 403, serine 418, serine 427, and serine 433. A disordered region spans residues 392–534; that stretch reads SASLTFGEGA…TDDEDEGRRK (143 aa). 2 stretches are compositionally biased toward polar residues: residues 471 to 489 and 496 to 511; these read TGSL…NSQG and VTLS…QASP. Phosphoserine is present on residues serine 510 and serine 514. A DH domain is found at 540–730; that stretch reads KAYFIAKEVS…TEMVAQLHGT (191 aa). One can recognise a PH 1 domain in the interval 759-856; sequence EFIRLGSLSK…WVEDIQMAID (98 aa). Serine 833, serine 872, and serine 878 each carry phosphoserine. The interval 866 to 902 is disordered; that stretch reads PEFLASSPPDNKSPDEATAADQESEDDLSASRTSLER. At threonine 883 the chain carries Phosphothreonine. Phosphoserine occurs at positions 889, 896, and 899. Residues 932-1029 enclose the PH 2 domain; that stretch reads ENQLSGNLLR…WMEVIRSATS (98 aa).

Interacts with CADM1. Interacts with RAC1.

Its subcellular location is the cell membrane. It is found in the synapse. It localises to the synaptosome. The protein localises to the cytoplasm. The protein resides in the cytosol. Its subcellular location is the cell projection. It is found in the filopodium. It localises to the dendrite. The protein localises to the dendritic spine. Functionally, functions as a guanine nucleotide exchange factor for RAC1. May play a role in semaphorin signaling. Plays a role in the assembly and disassembly of dendritic filopodia, the formation of dendritic spines, regulation of dendrite length and ultimately the formation of synapses. This chain is FERM, ARHGEF and pleckstrin domain-containing protein 1 (FARP1), found in Pongo abelii (Sumatran orangutan).